The primary structure comprises 154 residues: MADPGSVGHVFRRAFSWLPAQFASQSDAPVGAPRQFRSTEHLSIEAIAAFVDGELRMNAHLRAAHHLSLCAQCAAEVDDQSRARAALRDSHPIRIPSTLLGLLSEIPRCPPEGPSKGSSGGSSQGPPDGAAAGFGDRFADGDGGNRGRQSRVRR.

T39 carries the phosphothreonine; by PknB modification. Residues H66, C70, and C73 each contribute to the Zn(2+) site. Positions S104–R154 are disordered. A compositionally biased stretch (low complexity) spans Q124–D136.

Belongs to the zinc-associated anti-sigma factor (ZAS) superfamily. As to quaternary structure, interacts with cognate ECF RNA polymerase sigma factor SigE under reducing conditions; this inhibits the interaction of SigE with the RNA polymerase catalytic core. It depends on Zn(2+) as a cofactor. In terms of processing, phosphorylated by PknB on Thr-39; can be dephosphorylated (at least in vitro) by PstP. Phosphorylation is the signal for subsequent degradation by the ClpC1-ClpP2 complex. Degraded following vancomycin treatment (surface stress) by a ClpC1-ClpP2 complex.

The protein localises to the cytoplasm. Functionally, an anti-sigma factor for extracytoplasmic function (ECF) sigma factor SigE. ECF sigma factors are held in an inactive form by an anti-sigma factor. In Mycobacterium tuberculosis (strain ATCC 25618 / H37Rv), this protein is Anti-sigma-E factor RseA (rseA).